Here is an 89-residue protein sequence, read N- to C-terminus: Small ribosomal subunit protein uS15 (89 aa).

The protein belongs to the universal ribosomal protein uS15 family. Part of the 30S ribosomal subunit. Forms a bridge to the 50S subunit in the 70S ribosome, contacting the 23S rRNA.

Its function is as follows. One of the primary rRNA binding proteins, it binds directly to 16S rRNA where it helps nucleate assembly of the platform of the 30S subunit by binding and bridging several RNA helices of the 16S rRNA. Functionally, forms an intersubunit bridge (bridge B4) with the 23S rRNA of the 50S subunit in the ribosome. In Bordetella avium (strain 197N), this protein is Small ribosomal subunit protein uS15.